Here is a 151-residue protein sequence, read N- to C-terminus: 3-hydroxyacyl-[acyl-carrier-protein] dehydratase FabZ (151 aa).

Histidine 49 is an active-site residue.

This sequence belongs to the thioester dehydratase family. FabZ subfamily.

Its subcellular location is the cytoplasm. It catalyses the reaction a (3R)-hydroxyacyl-[ACP] = a (2E)-enoyl-[ACP] + H2O. In terms of biological role, involved in unsaturated fatty acids biosynthesis. Catalyzes the dehydration of short chain beta-hydroxyacyl-ACPs and long chain saturated and unsaturated beta-hydroxyacyl-ACPs. The sequence is that of 3-hydroxyacyl-[acyl-carrier-protein] dehydratase FabZ from Bordetella parapertussis (strain 12822 / ATCC BAA-587 / NCTC 13253).